The following is a 454-amino-acid chain: tRNA modification GTPase MnmE (454 aa).

3 residues coordinate (6S)-5-formyl-5,6,7,8-tetrahydrofolate: R23, E80, and K120. Residues 216 to 377 form the TrmE-type G domain; it reads GMKVVIAGRP…LRNHLKQSMG (162 aa). K(+) is bound at residue N226. Residues 226-231, 245-251, 270-273, 335-338, and 358-360 each bind GTP; these read NAGKSS, TDIAGTT, DTAG, NKAD, and SAR. S230 is a Mg(2+) binding site. Residues T245, I247, and T250 each coordinate K(+). T251 contacts Mg(2+). K454 contacts (6S)-5-formyl-5,6,7,8-tetrahydrofolate.

The protein belongs to the TRAFAC class TrmE-Era-EngA-EngB-Septin-like GTPase superfamily. TrmE GTPase family. As to quaternary structure, homodimer. Heterotetramer of two MnmE and two MnmG subunits. Requires K(+) as cofactor.

The protein resides in the cytoplasm. In terms of biological role, exhibits a very high intrinsic GTPase hydrolysis rate. Involved in the addition of a carboxymethylaminomethyl (cmnm) group at the wobble position (U34) of certain tRNAs, forming tRNA-cmnm(5)s(2)U34. This Salmonella gallinarum (strain 287/91 / NCTC 13346) protein is tRNA modification GTPase MnmE.